The sequence spans 298 residues: Bifunctional protein FolD (298 aa).

NADP(+) is bound by residues glycine 165–serine 167, serine 190, and isoleucine 231.

This sequence belongs to the tetrahydrofolate dehydrogenase/cyclohydrolase family. As to quaternary structure, homodimer.

It carries out the reaction (6R)-5,10-methylene-5,6,7,8-tetrahydrofolate + NADP(+) = (6R)-5,10-methenyltetrahydrofolate + NADPH. The catalysed reaction is (6R)-5,10-methenyltetrahydrofolate + H2O = (6R)-10-formyltetrahydrofolate + H(+). The protein operates within one-carbon metabolism; tetrahydrofolate interconversion. Functionally, catalyzes the oxidation of 5,10-methylenetetrahydrofolate to 5,10-methenyltetrahydrofolate and then the hydrolysis of 5,10-methenyltetrahydrofolate to 10-formyltetrahydrofolate. The protein is Bifunctional protein FolD of Prochlorococcus marinus (strain MIT 9312).